A 185-amino-acid chain; its full sequence is ADP-ribosylation factor (185 aa).

The N-myristoyl glycine moiety is linked to residue glycine 2. Residues 27 to 34, 70 to 74, and 129 to 132 contribute to the GTP site; these read GLDAAGKT, DVGGQ, and NKQD.

Belongs to the small GTPase superfamily. Arf family.

The protein resides in the golgi apparatus. Its function is as follows. GTP-binding protein involved in protein trafficking; may modulate vesicle budding and uncoating within the Golgi apparatus. The sequence is that of ADP-ribosylation factor from Neurospora crassa (strain ATCC 24698 / 74-OR23-1A / CBS 708.71 / DSM 1257 / FGSC 987).